We begin with the raw amino-acid sequence, 655 residues long: uncharacterized protein (655 aa).

The signal sequence occupies residues 1 to 23 (MKRTIKYLSFLGLIPFLSITTIS). A lipid anchor (N-palmitoyl cysteine) is attached at Cys24. The S-diacylglycerol cysteine moiety is linked to residue Cys24.

The protein belongs to the MG067/MG068/MG395 family.

The protein localises to the cell membrane. This is an uncharacterized protein from Mycoplasma capricolum subsp. capricolum (strain California kid / ATCC 27343 / NCTC 10154).